Here is a 63-residue protein sequence, read N- to C-terminus: Large ribosomal subunit protein uL29 (63 aa).

The protein belongs to the universal ribosomal protein uL29 family.

This is Large ribosomal subunit protein uL29 from Pectobacterium atrosepticum (strain SCRI 1043 / ATCC BAA-672) (Erwinia carotovora subsp. atroseptica).